The following is a 387-amino-acid chain: Paralemmin-1 (387 aa).

Position 1 is an N-acetylmethionine (Met-1). A coiled-coil region spans residues 7–104 (ETISQQERLQ…IEELENADTL (98 aa)). Disordered regions lie at residues 22–78 (RRRQ…QEDE) and 98–133 (LENADTLPAPVKETQVAPSPGPVVPAPCPAQEDRKA). Basic and acidic residues-rich tracts occupy residues 25–41 (QAEVENRRRQLEDDRRQ) and 69–78 (DMRKQMQEDE). Position 116 is a phosphoserine (Ser-116). Residues 116 to 125 (SPGPVVPAPC) show a composition bias toward pro residues. Residues Thr-142 and Thr-146 each carry the phosphothreonine modification. A Phosphoserine modification is found at Ser-163. Phosphothreonine is present on Thr-244. Ser-246 is modified (phosphoserine). 2 disordered regions span residues 246 to 297 (SEAG…QEPP) and 334 to 378 (AAEP…DMKK). The segment covering 258–273 (GPSEEVVRTTPSRREI) has biased composition (basic and acidic residues). Residues 286 to 297 (GPPGIQPGQEPP) show a composition bias toward low complexity. Phosphoserine occurs at positions 346 and 369. S-palmitoyl cysteine attachment occurs at residues Cys-381 and Cys-383. A Cysteine methyl ester modification is found at Cys-384. Cys-384 is lipidated: S-farnesyl cysteine. The propeptide at 385–387 (SIM) is removed in mature form.

It belongs to the paralemmin family. In terms of assembly, interacts with dopamine receptor DRD3. Phosphorylated.

It localises to the cell membrane. Its subcellular location is the cell projection. The protein localises to the filopodium membrane. The protein resides in the axon. It is found in the dendrite. It localises to the dendritic spine. Its subcellular location is the basolateral cell membrane. The protein localises to the apicolateral cell membrane. Functionally, involved in plasma membrane dynamics and cell process formation. Necessary for axonal and dendritic filopodia induction, for dendritic spine maturation and synapse formation in a palmitoylation-dependent manner. The polypeptide is Paralemmin-1 (PALM) (Sus scrofa (Pig)).